Here is a 79-residue protein sequence, read N- to C-terminus: Acyl carrier protein (79 aa).

Positions 2-77 constitute a Carrier domain; it reads SEVADKVKKI…DAVEYIEKQK (76 aa). The residue at position 37 (Ser37) is an O-(pantetheine 4'-phosphoryl)serine.

Belongs to the acyl carrier protein (ACP) family. Post-translationally, 4'-phosphopantetheine is transferred from CoA to a specific serine of apo-ACP by AcpS. This modification is essential for activity because fatty acids are bound in thioester linkage to the sulfhydryl of the prosthetic group.

Its subcellular location is the cytoplasm. It functions in the pathway lipid metabolism; fatty acid biosynthesis. Carrier of the growing fatty acid chain in fatty acid biosynthesis. In Granulibacter bethesdensis (strain ATCC BAA-1260 / CGDNIH1), this protein is Acyl carrier protein.